The following is a 34-amino-acid chain: Photosystem I reaction center subunit XII (34 aa).

The helical transmembrane segment at 10-32 (IFIALVVAAHAGVLAVRLCVSLY) threads the bilayer.

This sequence belongs to the PsaM family.

The protein localises to the cellular thylakoid membrane. In Synechococcus sp. (strain WH7803), this protein is Photosystem I reaction center subunit XII.